The primary structure comprises 311 residues: Putative dihydroorotate dehydrogenase A (fumarate) (311 aa).

Substrate contacts are provided by residues K45, 69 to 73, and N128; that span reads NSMGL. 45–46 is an FMN binding site; sequence KT. N128 is a binding site for FMN. C131 (nucleophile) is an active-site residue. K165 and V193 together coordinate FMN. 194–195 contacts substrate; it reads NS. Residues G220, 248 to 249, and 270 to 271 contribute to the FMN site; these read GG and GT.

The protein belongs to the dihydroorotate dehydrogenase family. Type 1 subfamily. Homodimer. It depends on FMN as a cofactor.

It localises to the cytoplasm. It catalyses the reaction (S)-dihydroorotate + fumarate = orotate + succinate. The protein operates within pyrimidine metabolism; UMP biosynthesis via de novo pathway. Catalyzes the conversion of dihydroorotate to orotate with fumarate as the electron acceptor. The polypeptide is Putative dihydroorotate dehydrogenase A (fumarate) (pyrD) (Streptococcus equi subsp. equi (strain 4047)).